A 215-amino-acid chain; its full sequence is Cytochrome b6 (215 aa).

A helical membrane pass occupies residues 32 to 52 (IFYCLGGITLTCFLVQVATGF). Residue Cys35 participates in heme c binding. Residues His86 and His100 each contribute to the heme b site. The next 3 membrane-spanning stretches (helical) occupy residues 90–110 (ASMM…TGGF), 116–136 (LTWV…VTGY), and 186–206 (LHTF…FLMI). Heme b-binding residues include His187 and His202.

It belongs to the cytochrome b family. PetB subfamily. In terms of assembly, the 4 large subunits of the cytochrome b6-f complex are cytochrome b6, subunit IV (17 kDa polypeptide, PetD), cytochrome f and the Rieske protein, while the 4 small subunits are PetG, PetL, PetM and PetN. The complex functions as a dimer. Heme b is required as a cofactor. The cofactor is heme c.

The protein localises to the plastid. It is found in the chloroplast thylakoid membrane. Functionally, component of the cytochrome b6-f complex, which mediates electron transfer between photosystem II (PSII) and photosystem I (PSI), cyclic electron flow around PSI, and state transitions. This chain is Cytochrome b6, found in Physcomitrium patens (Spreading-leaved earth moss).